The primary structure comprises 583 residues: MSTSTAKRPFDNKRAGSPDDGTDSDSGGNNSGSSPASKRRERKPGRKPLETEAKDKRTAQNRAAQRAFRERRERKMKELEDKVSQLESLNKQSELETKFLRNQVTNLLSELKRYNPELPKKRDSILLDYLAKQRKASIDSNPDFSAAANKAANSKDSSTAISSSNFQFEFPWKMDPSKIPSPSSDSTSPSASTSILDNANNKSVSSTNLNHSRSSISNSSSSPSNVNGLSSRKHSNTLNLYQTQSNVTSEFDFDSQFDESVSSFCSKLSMACGTKSNPIPKASPVSTPSSSDLLKPKSNSNVNITNHNNNKINSKDLSSSAPLHDSASASALNNHDSVNAVSNQFSVDKQYNDSSHSQATPNGLDNDSSVSAWQQPSFGQLGFRTDQLFDLDLDSASPITKQKDNNYSTTTNNTNSPAKADGMYWNFNTPLSNMVSRNMQNPEIPFIDTGLAFPDYDDPLLDILKEEQENEQVEGDSDPIQALINEEPSMPLCHDPAANAGASVSETDKLSNQEEIVQDIIPSNDGKLLKCSEVWDRITAHPRYSDLDIDGLCLELRTKAKCSEKGVVVNAEDVQKALISHMQ.

The interval 1–86 is disordered; it reads MSTSTAKRPF…KELEDKVSQL (86 aa). Positions 8–17 are enriched in basic and acidic residues; the sequence is RPFDNKRAGS. A compositionally biased stretch (low complexity) spans 24–36; that stretch reads SDSGGNNSGSSPA. Residues 37–46 show a composition bias toward basic residues; it reads SKRRERKPGR. The short motif at 41–48 is the Bipartite nuclear localization signal element; the sequence is ERKPGRKP. Basic and acidic residues-rich tracts occupy residues 47-58 and 67-84; these read KPLETEAKDKRT and AFRE…DKVS. The bZIP domain occupies 51–114; sequence TEAKDKRTAQ…TNLLSELKRY (64 aa). The segment at 54–77 is basic motif; it reads KDKRTAQNRAAQRAFRERRERKMK. Positions 79–86 are leucine-zipper; it reads LEDKVSQL. The Bipartite nuclear localization signal signature appears at 120–127; the sequence is KKRDSILL. A compositionally biased stretch (low complexity) spans 177–195; sequence SKIPSPSSDSTSPSASTSI. A disordered region spans residues 177–233; it reads SKIPSPSSDSTSPSASTSILDNANNKSVSSTNLNHSRSSISNSSSSPSNVNGLSSRK. Residues 196 to 207 are compositionally biased toward polar residues; sequence LDNANNKSVSST. Residues 208–230 are compositionally biased toward low complexity; sequence NLNHSRSSISNSSSSPSNVNGLS. Residues 265-272 are n-CRD; it reads CSKLSMAC. Intrachain disulfides connect C265/C531 and C272/C562. 2 disordered regions span residues 275-329 and 350-373; these read KSNP…SASA and QYND…VSAW. The span at 297-312 shows a compositional bias: low complexity; sequence KSNSNVNITNHNNNKI. The segment covering 316 to 329 has biased composition (polar residues); it reads DLSSSAPLHDSASA. The c-CRD stretch occupies residues 531–562; sequence CSEVWDRITAHPRYSDLDIDGLCLELRTKAKC. Residues 547 to 554 carry the Nuclear export signal motif; the sequence is LDIDGLCL.

It belongs to the bZIP family. YAP subfamily. Oxidative stress induces conformational changes through oxidation of cysteine residues, masking the nuclear export signal, thus abolishing nuclear export by CRM1/exportin 1.

The protein localises to the nucleus. Its subcellular location is the cytoplasm. Its function is as follows. Transcription activator involved in oxidative stress response and cadmium resistance. Regulates the transcription of genes encoding antioxidant enzymes and components of the cellular thiol-reducing pathways. Activity of the transcription factor is controlled through oxidation of specific cysteine residues resulting in the alteration of its subcellular location. Activation by alkyl hydroperoxides or cadmium induces nuclear accumulation and as a result YAP1 transcriptional activity. The protein is AP-1-like transcription factor YAP1 (YAP1) of Kluyveromyces lactis (strain ATCC 8585 / CBS 2359 / DSM 70799 / NBRC 1267 / NRRL Y-1140 / WM37) (Yeast).